The sequence spans 425 residues: Na(+)/H(+) antiporter NhaA 1 (425 aa).

The next 11 helical transmembrane spans lie at 20–40, 65–85, 102–122, 131–151, 160–180, 183–203, 218–238, 272–292, 303–323, 342–362, and 373–393; these read AGGV…NSPL, PHLW…GLEI, LPFI…LAVT, GWAI…ALLG, LFLT…IALA, ASIK…MMAM, FVLL…AGVL, FLIV…GFSL, IAAG…WAAV, LSVL…LAFA, and LGVI…LRFA.

It belongs to the NhaA Na(+)/H(+) (TC 2.A.33) antiporter family.

It localises to the cell inner membrane. The enzyme catalyses Na(+)(in) + 2 H(+)(out) = Na(+)(out) + 2 H(+)(in). Na(+)/H(+) antiporter that extrudes sodium in exchange for external protons. The protein is Na(+)/H(+) antiporter NhaA 1 of Novosphingobium aromaticivorans (strain ATCC 700278 / DSM 12444 / CCUG 56034 / CIP 105152 / NBRC 16084 / F199).